A 499-amino-acid polypeptide reads, in one-letter code: 3-beta-hydroxylase (499 aa).

Residues Phe-2–Ile-22 form a helical; Signal-anchor for type II membrane protein membrane-spanning segment. Heme is bound at residue Cys-441.

This sequence belongs to the cytochrome P450 family. Heme is required as a cofactor.

The protein resides in the membrane. The enzyme catalyses (+)-costunolide + reduced [NADPH--hemoprotein reductase] + O2 = 3beta-hydroxycostunolide + oxidized [NADPH--hemoprotein reductase] + H2O + H(+). It catalyses the reaction parthenolide + reduced [NADPH--hemoprotein reductase] + O2 = 3beta-hydroxyparthenolide + oxidized [NADPH--hemoprotein reductase] + H2O + H(+). It functions in the pathway secondary metabolite biosynthesis; terpenoid biosynthesis. Functionally, involved in the biosynthesis of germacrene-derived sesquiterpene lactones. Component of the parthenolide biosynthetic pathway; parthenolide and conjugates are promising anti-cancer drugs highly active against colon cancer cells. Catalyzes the conversion of costunolide and parthenolide to 3-beta-hydroxycostunolide and 3-beta-hydroxyparthenolide, respectively. This chain is 3-beta-hydroxylase, found in Tanacetum parthenium (Feverfew).